We begin with the raw amino-acid sequence, 265 residues long: Exosome complex component RRP42 (265 aa).

Belongs to the RNase PH family. Component of the RNA exosome complex. Specifically part of the catalytically inactive RNA exosome core complex (Exo-9) which may associate with the catalytic subunits RRP6 and DIS3 in cytoplasmic- and nuclear-specific RNA exosome complex forms. Exo-9 is formed by a hexameric base ring of RNase PH domain-containing subunits and a cap ring consisting of CSL4, RRP4 and RRP40.

Its subcellular location is the cytoplasm. The protein resides in the nucleus. The protein localises to the nucleolus. Non-catalytic component of the RNA exosome complex which has 3'-&gt;5' exoribonuclease activity and participates in a multitude of cellular RNA processing and degradation events. In the nucleus, the RNA exosome complex is involved in proper maturation of stable RNA species such as rRNA, snRNA and snoRNA, in the elimination of RNA processing by-products and non-coding 'pervasive' transcripts, such as antisense RNA species and cryptic unstable transcripts (CUTs), and of mRNAs with processing defects, thereby limiting or excluding their export to the cytoplasm. In the cytoplasm, the RNA exosome complex is involved in general mRNA turnover and in RNA surveillance pathways, preventing translation of aberrant mRNAs. The catalytic inactive RNA exosome core complex of 9 subunits (Exo-9) is proposed to play a pivotal role in the binding and presentation of RNA for ribonucleolysis, and to serve as a scaffold for the association with catalytic subunits and accessory proteins or complexes. RRP42 is part of the hexameric ring of RNase PH domain-containing subunits proposed to form a central channel which threads RNA substrates for degradation. The polypeptide is Exosome complex component RRP42 (RRP42) (Saccharomyces cerevisiae (strain ATCC 204508 / S288c) (Baker's yeast)).